We begin with the raw amino-acid sequence, 603 residues long: UvrABC system protein C (603 aa).

Residues 13 to 92 enclose the GIY-YIG domain; that stretch reads SSPGVYLMKD…IKQHHPKYNV (80 aa). A UVR domain is found at 205–240; it reads EEVVKDLEKVIQKASDNLEFEQAANYYRTLSLIKQA.

The protein belongs to the UvrC family. Interacts with UvrB in an incision complex.

The protein localises to the cytoplasm. Functionally, the UvrABC repair system catalyzes the recognition and processing of DNA lesions. UvrC both incises the 5' and 3' sides of the lesion. The N-terminal half is responsible for the 3' incision and the C-terminal half is responsible for the 5' incision. The sequence is that of UvrABC system protein C from Chlamydia pneumoniae (Chlamydophila pneumoniae).